The following is a 519-amino-acid chain: Histidine--tRNA ligase, cytoplasmic (519 aa).

L-histidine-binding positions include 135–137, arginine 162, glutamine 178, aspartate 182, arginine 331, and 335–336; these read DLT and YY.

It belongs to the class-II aminoacyl-tRNA synthetase family. Homodimer.

The protein resides in the cytoplasm. The enzyme catalyses tRNA(His) + L-histidine + ATP = L-histidyl-tRNA(His) + AMP + diphosphate + H(+). In terms of biological role, catalyzes the ATP-dependent ligation of histidine to the 3'-end of its cognate tRNA, via the formation of an aminoacyl-adenylate intermediate (His-AMP). Plays a role in axon guidance. This Takifugu rubripes (Japanese pufferfish) protein is Histidine--tRNA ligase, cytoplasmic (hars1).